A 518-amino-acid polypeptide reads, in one-letter code: Probable carboxypeptidase 2 (518 aa).

The N-terminal stretch at 1-21 (MVAYHLLTLISLGLGSHCASA) is a signal peptide. An N-linked (GlcNAc...) asparagine glycan is attached at asparagine 46. The tract at residues 53–76 (PAFTSPGTVPRGFSDGTSGPTRDE) is disordered. In terms of domain architecture, Peptidase M14 spans 71–351 (GPTRDETMEG…VMAKSILQTA (281 aa)). Asparagine 116 is a glycosylation site (N-linked (GlcNAc...) asparagine). 3 residues coordinate Zn(2+): histidine 136, glutamate 139, and histidine 224. Glutamate 322 acts as the Proton donor/acceptor in catalysis. Residues asparagine 393 and asparagine 459 are each glycosylated (N-linked (GlcNAc...) asparagine).

This sequence belongs to the peptidase M14 family. Requires Zn(2+) as cofactor.

It localises to the secreted. Functionally, extracellular metalloprotease that contributes to pathogenicity. The protein is Probable carboxypeptidase 2 (MCPB) of Trichophyton verrucosum (strain HKI 0517).